The following is a 447-amino-acid chain: SNF1-related protein kinase regulatory subunit gamma-1-like (447 aa).

N-acetylalanine is present on Ala-2. At Ser-35 the chain carries Phosphoserine. CBS domains are found at residues 54–120, 214–275, 292–350, and 374–433; these read QVPG…SAEL, SFRW…GRDW, MSPN…PEVF, and LAIP…PNYF.

It belongs to the 5'-AMP-activated protein kinase gamma subunit family. As to quaternary structure, subunit of a probable heterotrimeric complex consisting of an alpha catalytic (KIN10 or KIN11) subunit, and a beta (KINB) and a gamma (KING or SNF4) non-catalytic regulatory subunits.

Regulatory subunit of the probable trimeric SNF1-related protein kinase (SnRK) complex, which may play a role in a signal transduction cascade regulating gene expression and carbohydrate metabolism in higher plants. The protein is SNF1-related protein kinase regulatory subunit gamma-1-like (CBSCBS2) of Arabidopsis thaliana (Mouse-ear cress).